The following is a 225-amino-acid chain: Suppressor of cytokine signaling 3 (225 aa).

A kinase inhibitory region (KIR) region spans residues 22-33 (LKTFSSKSEYQL). Residues 34 to 45 (VVNAVRKLQESG) are extended SH2 subdomain (ESS). Residues 46 to 142 (FYWSAVTGGE…TPSFSLPPTE (97 aa)) form the SH2 domain. Residues 131 to 160 (PGTPSFSLPPTEPSSEVPEQPPAQALPGST) are disordered. An SOCS box domain is found at 177 to 224 (VLSRPLSSNVATLQHLCRKTVNGHLDSYEKVTQLPGPIREFLDQYDAP).

As to quaternary structure, interacts with multiple activated proteins of the tyrosine kinase signaling pathway including IGF1 receptor, insulin receptor and JAK2. Binding to JAK2 is mediated through the KIR and SH2 domains to a phosphorylated tyrosine residue within the JAK2 JH1 domain. Binds specific activated tyrosine residues of the leptin, EPO, IL12, GSCF and gp130 receptors. Interaction with CSNK1E stabilizes SOCS3 protein. Component of the probable ECS(SOCS3) E3 ubiquitin-protein ligase complex which contains CUL5, RNF7/RBX2, elongin BC complex and SOCS3. Interacts with CUL5, RNF7, ELOB and ELOC. Interacts with FGFR3. Interacts with INSR. Interacts with BCL10; this interaction may interfere with BCL10-binding with PELI2. Interacts with NOD2 (via CARD domain); the interaction promotes NOD2 degradation. Phosphorylated on tyrosine residues after stimulation by the cytokines, IL-2, EPO or IGF1. As to expression, low expression in lung, spleen and thymus. Expressed in Th2 but not TH1 cells.

It functions in the pathway protein modification; protein ubiquitination. In terms of biological role, SOCS family proteins form part of a classical negative feedback system that regulates cytokine signal transduction. SOCS3 is involved in negative regulation of cytokines that signal through the JAK/STAT pathway. Inhibits cytokine signal transduction by binding to tyrosine kinase receptors including IL6ST/gp130, LIF, erythropoietin, insulin, IL12, GCSF and leptin receptors. Binding to JAK2 inhibits its kinase activity and regulates IL6 signaling. Suppresses fetal liver erythropoiesis. Regulates onset and maintenance of allergic responses mediated by T-helper type 2 cells. Probable substrate recognition component of a SCF-like ECS (Elongin BC-CUL2/5-SOCS-box protein) E3 ubiquitin-protein ligase complex which mediates the ubiquitination and subsequent proteasomal degradation of target proteins. This Mus musculus (Mouse) protein is Suppressor of cytokine signaling 3.